The sequence spans 977 residues: MASSHSSSPVPQGSSSDVFFKIEVDPSKHIRPVPSLPDVCPKEPTGDSHSLYVAPSLVTDQHRWTVYHSKVNLPAALNDPRLAKRESDFFTKTWGLDFVDTEVIPSFYLPQISKEHFTVYQQEISQREKIHERCKNICPPKDTFERTLLHTHDKSRTDLEQVPKIFMKPDFALDDSLTFNSVLPWSHFNTAGGKGNRDAASSKLLQEKLSHYLDIVEVNIAHQISLRSEAFFHAMTSQHELQDYLRKTSQAVKMLRDKIAQIDKVMCEGSLHILRLALTRNNCVKVYNKLKLMATVHQTQPTVQVLLSTSEFVGALDLIATTQEVLQQELQGIHSFRHLGSQLCELEKLIDKMMIAEFSTYSHSDLNRPLEDDCQVLEEERLISLVFGLLKQRKLNFLEIYGEKMVITAKNIIKQCVINKVSQTEEIDTDVVVKLADQMRMLNFPQWFDLLKDIFSKFTIFLQRVKATLNIIHSVVLSVLDKNQRTRELEEISQQKNAAKDNSLDTEVAYLIHEGMFISDAFGEGELTPIAVDTTSQRNASPNSEPCSSDSVSEPECTTDSSSSKEHTSSSAIPGGVDIMVSEDMKLTDSELGKLANNIQELLYSASDICHDRAVKFLMSRAKDGFLEKLNSMEFITLSRLMETFILDTEQICGRKSTSLLGALQSQAIKFVNRFHEERKTKLSLLLDNERWKQADVPAEFQDLVDSLSDGKIALPEKKSGATEERKPAEVLIVEGQQYAVVGTVLLLIRIILEYCQCVDNIPSVTTDMLTRLSDLLKYFNSRSCQLVLGAGALQVVGLKTITTKNLALSSRCLQLIVHYIPVIRAHFEARLPPKQYSMLRHFDHITKDYHDHIAEISAKLVAIMDSLFDKLLSKYEVKAPVPSACFRNICKQMTKMHEAIFDLLPEEQTQMLFLRINASYKLHLKKQLSHLNVINDGGPQNGLVTADVAFYTGNLQALKGLKDLDLNMAEIWEQKR.

Ser8 is subject to Phosphoserine. 2 coiled-coil regions span residues 240 to 260 (ELQD…DKIA) and 480 to 507 (LDKN…LDTE). The span at 535–552 (TSQRNASPNSEPCSSDSV) shows a compositional bias: polar residues. Positions 535 to 575 (TSQRNASPNSEPCSSDSVSEPECTTDSSSSKEHTSSSAIPG) are disordered. Residues 582-603 (SEDMKLTDSELGKLANNIQELL) adopt a coiled-coil conformation.

This sequence belongs to the VPS54 family. Component of the Golgi-associated retrograde protein (GARP) complex, also called VFT (VPS fifty-three) complex, composed of VPS51, VPS52, VPS53 and VPS54. EIPR1 interacts with GARP complex and mediates its recruitment to the trans-Golgi network. Interacts with VPS51 in an EIPR1-independent manner.

The protein resides in the golgi apparatus. It is found in the trans-Golgi network. Its subcellular location is the membrane. Acts as a component of the GARP complex that is involved in retrograde transport from early and late endosomes to the trans-Golgi network (TGN). The GARP complex is required for the maintenance of the cycling of mannose 6-phosphate receptors between the TGN and endosomes, this cycling is necessary for proper lysosomal sorting of acid hydrolases such as CTSD. Within the GARP complex, required to tether the complex to the TGN. Not involved in endocytic recycling. The sequence is that of Vacuolar protein sorting-associated protein 54 (VPS54) from Homo sapiens (Human).